An 806-amino-acid polypeptide reads, in one-letter code: Disintegrin and metalloproteinase domain-containing protein 1b (806 aa).

An N-terminal signal peptide occupies residues 1-33; it reads MERLKLGKIPEHWCIRLVAMLLLAIIFLPSTFC. A disordered region spans residues 169 to 188; that stretch reads CSVTPKDSPGDTSHPPRSRK. A Peptidase M12B domain is found at 203–397; it reads KYVEMFVVVN…HRGVCLLDEP (195 aa). Asn-224 carries an N-linked (GlcNAc...) asparagine glycan. 7 disulfides stabilise this stretch: Cys-313/Cys-392, Cys-353/Cys-376, Cys-355/Cys-361, Cys-462/Cys-482, Cys-635/Cys-647, Cys-641/Cys-653, and Cys-655/Cys-664. His-338 provides a ligand contact to Zn(2+). The active site involves Glu-339. Zn(2+) contacts are provided by His-342 and His-348. Residues Asn-375 and Asn-476 are each glycosylated (N-linked (GlcNAc...) asparagine). Residues 406 to 490 enclose the Disintegrin domain; sequence AANCGNGVVE…ACPSDRKAQD (85 aa). One can recognise an EGF-like domain in the interval 631 to 665; it reads FSFPCSPSKQCNKHGVCNDLGNCHCSFGFAPPDCK. The tract at residues 668–694 is disordered; it reads GTGGSVDSGPAVNLSNDSSPGPNSTQS. N-linked (GlcNAc...) asparagine glycans are attached at residues Asn-680, Asn-683, and Asn-690. Positions 680-694 are enriched in polar residues; that stretch reads NLSNDSSPGPNSTQS. The helical transmembrane segment at 705–725 threads the bilayer; sequence LIVLAVILVLMILLIIICIIS. Residues 726–806 lie on the Cytoplasmic side of the membrane; it reads AYTKSETASE…KDEDEEEGEE (81 aa). Residues 735 to 806 form a disordered region; sequence EAGPSELEEL…KDEDEEEGEE (72 aa). Acidic residues predominate over residues 740 to 806; that stretch reads ELEELPEGEK…KDEDEEEGEE (67 aa).

As to quaternary structure, heterodimer with ADAM2/fertilin subunit beta. In terms of tissue distribution, testis.

It is found in the membrane. May play a role in spermatogenesis and sperm maturation. This chain is Disintegrin and metalloproteinase domain-containing protein 1b (Adam1b), found in Mus musculus (Mouse).